Consider the following 372-residue polypeptide: MASSQLDRQRSRSAKMNRALTAAEWWRLGLMFAVIVALHLVGWLTVTLLVEPARLSLGGKAFGIGVGLTAYTLGLRHAFDADHIAAIDNTTRKLMSDGHRPLAVGFFFSLGHSTVVFGLAVMLVTGLKAIVGPVENDSSTLHHYTGLIGTSISGAFLYLIGILNVIVLVGIVRVFAHLRRGDYDEAELEQQLDNRGLLIRFLGRFTKSLTKSWHMYPVGFLFGLGFDTATEIALLVLAGTSAAAGLPWYAILCLPVLFAAGMCLLDTIDGSFMNFAYGWAFSSPVRKIYYNITVTGLSVAVALLIGSVELLGLIANQLGWQGPFWDWLGGLDLNTVGFVVVAMFALTWAIALLVWHYGRVEERWTPAPDRTT.

8 consecutive transmembrane segments (helical) span residues 30 to 50 (LMFA…TLLV), 55 to 75 (LSLG…TLGL), 104 to 124 (VGFF…VMLV), 152 to 172 (ISGA…VGIV), 218 to 238 (VGFL…LVLA), 245 to 265 (GLPW…MCLL), 294 to 314 (VTGL…LGLI), and 335 to 355 (TVGF…LLVW).

It belongs to the NiCoT transporter (TC 2.A.52) family.

Its subcellular location is the cell membrane. The enzyme catalyses Ni(2+)(in) = Ni(2+)(out). Export of the fluoroquinolone antibiotic norfloxacin is inhibited by the proton ionophore carbonyl cyanide m-chlorophenylhydrazone (CCCP). Nickel may influence the extrusion of antibiotics possibly by facilitating the proton motive force-dependent efflux process. Functionally, involved in nickel uptake. In addition, acts as a drug efflux pump and contributes to moderate tolerance towards different classes of antibiotics, including fluoroquinolones, aminoglycosides and the anti-TB drug isoniazid, with a preference for fluoroquinolones. The drug efflux function is probably dependent on proton motive force (pmf) or ion gradient, and might be facilitated by the presence of Ni(2+) ions. In Mycobacterium tuberculosis (strain ATCC 25618 / H37Rv), this protein is Nickel transporter NicT.